The following is a 194-amino-acid chain: FMN-dependent NADH:quinone oxidoreductase (194 aa).

FMN-binding positions include Ser-10, 16–18 (SQS), 91–94 (MYNF), and 135–138 (TRGG).

This sequence belongs to the azoreductase type 1 family. In terms of assembly, homodimer. Requires FMN as cofactor.

It carries out the reaction 2 a quinone + NADH + H(+) = 2 a 1,4-benzosemiquinone + NAD(+). The catalysed reaction is N,N-dimethyl-1,4-phenylenediamine + anthranilate + 2 NAD(+) = 2-(4-dimethylaminophenyl)diazenylbenzoate + 2 NADH + 2 H(+). In terms of biological role, quinone reductase that provides resistance to thiol-specific stress caused by electrophilic quinones. Functionally, also exhibits azoreductase activity. Catalyzes the reductive cleavage of the azo bond in aromatic azo compounds to the corresponding amines. The chain is FMN-dependent NADH:quinone oxidoreductase from Vibrio parahaemolyticus serotype O3:K6 (strain RIMD 2210633).